The following is a 309-amino-acid chain: tRNA dimethylallyltransferase (309 aa).

11 to 18 contributes to the ATP binding site; sequence GPTASGKS. 13–18 contributes to the substrate binding site; the sequence is TASGKS. 2 interaction with substrate tRNA regions span residues 36–39 and 160–164; these read DSMQ and QRLLR.

Belongs to the IPP transferase family. Monomer. Mg(2+) serves as cofactor.

The enzyme catalyses adenosine(37) in tRNA + dimethylallyl diphosphate = N(6)-dimethylallyladenosine(37) in tRNA + diphosphate. In terms of biological role, catalyzes the transfer of a dimethylallyl group onto the adenine at position 37 in tRNAs that read codons beginning with uridine, leading to the formation of N6-(dimethylallyl)adenosine (i(6)A). In Caulobacter sp. (strain K31), this protein is tRNA dimethylallyltransferase.